Here is a 556-residue protein sequence, read N- to C-terminus: MAVAAAAAAGPVFWRRLLGLLPGRPGLAALLGRLSDRLGRNRDRQRRRSPWLLLAPLLSPAVPQVTSPPCCLCPEGVHRFQWIRNLVPEFGVSSSHVRVLSSPAEFFELMKGQIRVAKRRVVMASLYLGTGPLEQELVDCLESTLEKSLQAKFPSNLKVSILLDFTRGSRGRKNSRTMLLPLLRRFPEQVRVSLFHTPHLRGLLRLLIPERFNETIGLQHIKVYLFDNSVILSGANLSDSYFTNRQDRYVFLQDCAEIADFFTELVDAVGDVSLQLQGDDTVQVVDGMVHPYKGDRAEYCKAANKRVMDVINSARTRQQMLHAQTFHSNSLLTQEDAAAAGDRRPAPDTWIYPLIQMKPFEIQIDEIVTETLLTEAERGAKVYLTTGYFNLTQAYMDLVLGTRAEYQILLASPEVNGFFGAKGVAGAIPAAYVHIERQFFSEVCSLGQQERVQLQEYWRRGWTFHAKGLWLYLAGSSLPCLTLIGSPNFGYRSVHRDLEAQIAIVTENQALQQQLHQEQEQLYLRSGVVSSATFEQPSRQVKLWVKMVTPLIKNFF.

The N-terminal 28 residues, 1 to 28, are a transit peptide targeting the mitochondrion; the sequence is MAVAAAAAAGPVFWRRLLGLLPGRPGLA. S49 carries the post-translational modification Phosphoserine. 124-131 lines the ATP pocket; sequence ASLYLGTG. 2 PLD phosphodiesterase domains span residues 215–241 and 460–493; these read TIGLQHIKVYLFDNSVILSGANLSDSY and RGWTFHAKGLWLYLAGSSLPCLTLIGSPNFGYRS. Catalysis depends on residues H220, K222, and D227.

This sequence belongs to the CDP-alcohol phosphatidyltransferase class-II family.

It is found in the mitochondrion. It catalyses the reaction a CDP-1,2-diacyl-sn-glycerol + sn-glycerol 3-phosphate = a 1,2-diacyl-sn-glycero-3-phospho-(1'-sn-glycero-3'-phosphate) + CMP + H(+). The protein operates within phospholipid metabolism; phosphatidylglycerol biosynthesis; phosphatidylglycerol from CDP-diacylglycerol: step 1/2. Its activity is regulated as follows. Activated by calcium and magnesium and inhibited by other bivalent cations. Its function is as follows. Functions in the biosynthesis of the anionic phospholipids phosphatidylglycerol and cardiolipin. The sequence is that of CDP-diacylglycerol--glycerol-3-phosphate 3-phosphatidyltransferase, mitochondrial (PGS1) from Homo sapiens (Human).